The primary structure comprises 437 residues: MGSVCLSGGGSLHGSVRVPGDKSISHRALLFGAIATGTTTIEGLLPAEDPLSTAACLRAMGVTVSAIDSSGVVRVEGVGLDGLQEPAQVLDCGNSGTTMRLMLGLLAGRHGRHFVLDGDGSLRRRPMARVAQPLAQMGAEIGGREGGNKAPLAIAGQTLSGGTIRTPVASAQVKSALLLAGLTAKGSTTVIEPALSRDHSERMLRAFGAELISEPHAAEGPTAIVRPGAELHGQHVVVPGDISSAAFWLIAALVVPGTELTIENVGINPTRTGILDVLEQMGAPLEVLNQRDVAGEPVADLRVRYSPLKAFEIGGELIPRLVDEIPILSVAALCAEGTSVMRDAAELRVKETDRLAVMARQLRAMGAELEETTDGMVIPGGQRLTGAQVDSETDHRVAMSLAVAALIASGDTSIDQSEAAAVSYPSFWDELARLQRS.

3-phosphoshikimate contacts are provided by Lys22, Ser23, and Arg27. Lys22 contributes to the phosphoenolpyruvate binding site. Residues Gly96 and Arg125 each coordinate phosphoenolpyruvate. Ser170, Gln172, Asp323, and Lys350 together coordinate 3-phosphoshikimate. Gln172 provides a ligand contact to phosphoenolpyruvate. The active-site Proton acceptor is the Asp323. Phosphoenolpyruvate-binding residues include Arg354 and Arg396.

The protein belongs to the EPSP synthase family. In terms of assembly, monomer.

It localises to the cytoplasm. It catalyses the reaction 3-phosphoshikimate + phosphoenolpyruvate = 5-O-(1-carboxyvinyl)-3-phosphoshikimate + phosphate. The protein operates within metabolic intermediate biosynthesis; chorismate biosynthesis; chorismate from D-erythrose 4-phosphate and phosphoenolpyruvate: step 6/7. Catalyzes the transfer of the enolpyruvyl moiety of phosphoenolpyruvate (PEP) to the 5-hydroxyl of shikimate-3-phosphate (S3P) to produce enolpyruvyl shikimate-3-phosphate and inorganic phosphate. The sequence is that of 3-phosphoshikimate 1-carboxyvinyltransferase from Synechococcus sp. (strain RCC307).